A 596-amino-acid polypeptide reads, in one-letter code: Alkaline phosphatase 4 (596 aa).

The N-terminal stretch at 1-20 (MHCLVILGFLLGSLVAFSWA) is a signal peptide. Position 93 (Asp93) interacts with Mg(2+). Asp93 lines the Zn(2+) pocket. Catalysis depends on Ser144, which acts as the Phosphoserine intermediate. Mg(2+) contacts are provided by His202 and Thr204. N-linked (GlcNAc...) asparagine glycans are attached at residues Asn262 and Asn297. Mg(2+) is bound at residue Glu369. Zn(2+) contacts are provided by Asp374 and His378. N-linked (GlcNAc...) asparagine glycosylation occurs at Asn401. Asp415 and His416 together coordinate Zn(2+). Asn464 and Asn470 each carry an N-linked (GlcNAc...) asparagine glycan. His504 serves as a coordination point for Zn(2+). A disulfide bridge connects residues Cys539 and Cys550. Residues 548–566 (DSCEDHKDGQKDRPLDKPN) show a composition bias toward basic and acidic residues. The tract at residues 548-570 (DSCEDHKDGQKDRPLDKPNPKRN) is disordered. Asn570 is lipidated: GPI-anchor amidated asparagine. A helical membrane pass occupies residues 571-591 (GATVVGASLIPILTAATAAIL). Positions 571–596 (GATVVGASLIPILTAATAAILRGRGL) are cleaved as a propeptide — removed in mature form.

The protein belongs to the alkaline phosphatase family. As to quaternary structure, homodimer. Mg(2+) serves as cofactor. It depends on Zn(2+) as a cofactor. In terms of tissue distribution, ellipsoid body ring neurons in the adult brain and in the lower Malpighian tubule and ureter.

It is found in the cell membrane. The catalysed reaction is a phosphate monoester + H2O = an alcohol + phosphate. Its function is as follows. Important role in neural and renal epithelial function. This Drosophila melanogaster (Fruit fly) protein is Alkaline phosphatase 4.